Consider the following 162-residue polypeptide: Transcriptional repressor NrdR (162 aa).

Residues 3 to 34 fold into a zinc finger; the sequence is CPYCHHTDSRVLESRSAEGGQSIRRRRECLAC. One can recognise an ATP-cone domain in the interval 49–139; the sequence is ITVIKRNGDR…VYRQFQGISD (91 aa).

This sequence belongs to the NrdR family. Requires Zn(2+) as cofactor.

In terms of biological role, negatively regulates transcription of bacterial ribonucleotide reductase nrd genes and operons by binding to NrdR-boxes. The chain is Transcriptional repressor NrdR from Thermosynechococcus vestitus (strain NIES-2133 / IAM M-273 / BP-1).